A 341-amino-acid polypeptide reads, in one-letter code: Methionine import ATP-binding protein MetN (341 aa).

In terms of domain architecture, ABC transporter spans 2–241; the sequence is INLQDVSKVY…PKEQMTKRFV (240 aa). Position 38–45 (38–45) interacts with ATP; it reads GYSGAGKS.

This sequence belongs to the ABC transporter superfamily. Methionine importer (TC 3.A.1.24) family. As to quaternary structure, the complex is composed of two ATP-binding proteins (MetN), two transmembrane proteins (MetP) and a solute-binding protein (MetQ).

The protein localises to the cell membrane. It catalyses the reaction L-methionine(out) + ATP + H2O = L-methionine(in) + ADP + phosphate + H(+). The enzyme catalyses D-methionine(out) + ATP + H2O = D-methionine(in) + ADP + phosphate + H(+). Part of the ABC transporter complex MetNPQ involved in methionine import. Responsible for energy coupling to the transport system. It has also been shown to be involved in methionine sulfoxide transport. The polypeptide is Methionine import ATP-binding protein MetN (Bacillus subtilis (strain 168)).